The chain runs to 80 residues: MSGQKYQLVSLLLIICLLFSQSTASGCNFKGSCRTDDQCKRICRGHGLDPSFQLCVPYSSKGGKCCCLHYEGAPLSSEVI.

A signal peptide spans 1–24 (MSGQKYQLVSLLLIICLLFSQSTA). 4 cysteine pairs are disulfide-bonded: cysteine 27–cysteine 67, cysteine 33–cysteine 55, cysteine 39–cysteine 65, and cysteine 43–cysteine 66.

Belongs to the DEFL family.

The protein localises to the secreted. The sequence is that of Defensin-like protein 276 from Arabidopsis thaliana (Mouse-ear cress).